A 426-amino-acid chain; its full sequence is Putative glutamate--cysteine ligase 2 (426 aa).

The protein belongs to the glutamate--cysteine ligase type 2 family. YbdK subfamily.

It carries out the reaction L-cysteine + L-glutamate + ATP = gamma-L-glutamyl-L-cysteine + ADP + phosphate + H(+). Functionally, ATP-dependent carboxylate-amine ligase which exhibits weak glutamate--cysteine ligase activity. The polypeptide is Putative glutamate--cysteine ligase 2 (Bradyrhizobium diazoefficiens (strain JCM 10833 / BCRC 13528 / IAM 13628 / NBRC 14792 / USDA 110)).